Here is an 813-residue protein sequence, read N- to C-terminus: Acyl-homoserine lactone acylase QuiP (813 aa).

Positions 1–26 (MAAPAFPPFRLRFATAATLLGMLGLA) are cleaved as a signal peptide. S262 acts as the Nucleophile in catalysis.

Belongs to the peptidase S45 family. As to quaternary structure, heterodimer of an alpha subunit and a beta subunit processed from the same precursor.

Its subcellular location is the periplasm. It catalyses the reaction an N-acyl-L-homoserine lactone + H2O = L-homoserine lactone + a carboxylate. In terms of biological role, catalyzes the deacylation of acyl-homoserine lactone (AHL or acyl-HSL), releasing homoserine lactone (HSL) and the corresponding fatty acid. Possesses a specificity for the degradation of long-chain acyl-HSLs (side chains of seven or more carbons in length). The protein is Acyl-homoserine lactone acylase QuiP (quiP) of Pseudomonas putida (strain ATCC 47054 / DSM 6125 / CFBP 8728 / NCIMB 11950 / KT2440).